Here is a 100-residue protein sequence, read N- to C-terminus: MELTPREKDKLLLFTAALVAERRLARGLKLNYPESVALISAFIMEGARDGKSVASLMEDGRHVLTRDRVMEGVPEMIPDIQVEATFPDGSKLVTVHNPIV.

The protein belongs to the urease gamma subunit family. In terms of assembly, heterotrimer of UreA (gamma), UreB (beta) and UreC (alpha) subunits. Three heterotrimers associate to form the active enzyme.

It localises to the cytoplasm. The catalysed reaction is urea + 2 H2O + H(+) = hydrogencarbonate + 2 NH4(+). Its pathway is nitrogen metabolism; urea degradation; CO(2) and NH(3) from urea (urease route): step 1/1. The sequence is that of Urease subunit gamma from Citrobacter koseri (strain ATCC BAA-895 / CDC 4225-83 / SGSC4696).